A 419-amino-acid polypeptide reads, in one-letter code: Pygopus homolog 1 (419 aa).

Disordered stretches follow at residues 1 to 64 (MPAE…PNSD) and 175 to 338 (HFRQ…SSSD). The span at 18–30 (GDSGLDGLGGPGV) shows a compositional bias: gly residues. Residues 35 to 41 (PDKKKRK) carry the Nuclear localization signal motif. Composition is skewed to polar residues over residues 175 to 221 (HFRQ…SNHS) and 240 to 255 (DFTQ…NSSA). Positions 276 to 286 (VNRNNAVNQEN) are enriched in low complexity. Residues 287-307 (SRSSSTEATNNNPANGTQNKP) are compositionally biased toward polar residues. A PHD-type zinc finger spans residues 340–398 (VYPCGICTNEVNDDQDAILCEASCQKWFHRICTGMTETAYGLLTAEASAVWGCDTCMAD). Residues 341 to 388 (YPCGICTNEVNDDQDAILCEASCQKWFHRICTGMTETAYGLLTAEASA) are interaction with H3K4me2. An interaction with BCL9 region spans residues 373–391 (GMTETAYGLLTAEASAVWG).

As to quaternary structure, interacts with BCL9 via The PHD-type zinc finger motiv, and thereby becomes part of the nuclear beta-catenin/TCF complex. Identified in a complex with BCL9L, CDC73, CTNNB1 and PYGO1. Interacts with histone H3 mono-, di- or tri-methylated at 'Lys4' (H3K4me1, H3K4me2, H3K4me3); the interaction is enhanced by the interaction with BCL9.

It localises to the nucleus. Its function is as follows. Involved in signal transduction through the Wnt pathway. The polypeptide is Pygopus homolog 1 (PYGO1) (Homo sapiens (Human)).